Consider the following 306-residue polypeptide: Pantothenate kinase (306 aa).

G91–S98 lines the ATP pocket.

This sequence belongs to the prokaryotic pantothenate kinase family.

It localises to the cytoplasm. It carries out the reaction (R)-pantothenate + ATP = (R)-4'-phosphopantothenate + ADP + H(+). Its pathway is cofactor biosynthesis; coenzyme A biosynthesis; CoA from (R)-pantothenate: step 1/5. The sequence is that of Pantothenate kinase from Streptococcus pneumoniae (strain JJA).